The chain runs to 389 residues: Lipid-A-disaccharide synthase (389 aa).

It belongs to the LpxB family.

It catalyses the reaction a lipid X + a UDP-2-N,3-O-bis[(3R)-3-hydroxyacyl]-alpha-D-glucosamine = a lipid A disaccharide + UDP + H(+). It participates in bacterial outer membrane biogenesis; LPS lipid A biosynthesis. In terms of biological role, condensation of UDP-2,3-diacylglucosamine and 2,3-diacylglucosamine-1-phosphate to form lipid A disaccharide, a precursor of lipid A, a phosphorylated glycolipid that anchors the lipopolysaccharide to the outer membrane of the cell. In Paraburkholderia phytofirmans (strain DSM 17436 / LMG 22146 / PsJN) (Burkholderia phytofirmans), this protein is Lipid-A-disaccharide synthase.